The following is a 609-amino-acid chain: Glutamine--fructose-6-phosphate aminotransferase [isomerizing] (609 aa).

Residue Cys-2 is the Nucleophile; for GATase activity of the active site. In terms of domain architecture, Glutamine amidotransferase type-2 spans 2–217; that stretch reads CGIVGAIAGR…EGDTAELRRD (216 aa). 2 consecutive SIS domains span residues 284-425 and 458-599; these read TADA…LQGR and WAER…VDKP. Catalysis depends on Lys-604, which acts as the For Fru-6P isomerization activity.

In terms of assembly, homodimer.

The protein localises to the cytoplasm. The enzyme catalyses D-fructose 6-phosphate + L-glutamine = D-glucosamine 6-phosphate + L-glutamate. Functionally, catalyzes the first step in hexosamine metabolism, converting fructose-6P into glucosamine-6P using glutamine as a nitrogen source. This chain is Glutamine--fructose-6-phosphate aminotransferase [isomerizing], found in Xanthomonas campestris pv. campestris (strain ATCC 33913 / DSM 3586 / NCPPB 528 / LMG 568 / P 25).